The chain runs to 195 residues: Large ribosomal subunit protein bL17 (195 aa).

Residues A132–S195 form a disordered region. Positions P159 to T186 are enriched in low complexity.

It belongs to the bacterial ribosomal protein bL17 family. Part of the 50S ribosomal subunit. Contacts protein L32.

In Parafrankia sp. (strain EAN1pec), this protein is Large ribosomal subunit protein bL17.